We begin with the raw amino-acid sequence, 427 residues long: Diaminobutyrate--2-oxoglutarate transaminase (427 aa).

Residue Lys264 is modified to N6-(pyridoxal phosphate)lysine.

Belongs to the class-III pyridoxal-phosphate-dependent aminotransferase family. Pyridoxal 5'-phosphate serves as cofactor.

It catalyses the reaction L-2,4-diaminobutanoate + 2-oxoglutarate = L-aspartate 4-semialdehyde + L-glutamate. It functions in the pathway amine and polyamine biosynthesis; ectoine biosynthesis; L-ectoine from L-aspartate 4-semialdehyde: step 1/3. Catalyzes reversively the conversion of L-aspartate beta-semialdehyde (ASA) to L-2,4-diaminobutyrate (DABA) by transamination with L-glutamate. This is Diaminobutyrate--2-oxoglutarate transaminase (ectB) from Wolinella succinogenes (strain ATCC 29543 / DSM 1740 / CCUG 13145 / JCM 31913 / LMG 7466 / NCTC 11488 / FDC 602W) (Vibrio succinogenes).